Reading from the N-terminus, the 354-residue chain is Major egg antigen (354 aa).

Residues 1 to 21 form a disordered region; the sequence is MSGGKQHNAVSIPVNREQRSF. SHSP domains are found at residues 122 to 233 and 251 to 354; these read SVND…VAVR and AKGV…AITH.

It belongs to the small heat shock protein (HSP20) family.

This is Major egg antigen from Schistosoma mansoni (Blood fluke).